The following is a 301-amino-acid chain: Ubiquitin thioesterase OTU1 (301 aa).

Residues 4 to 80 form a UBX-like region; the sequence is KVTGAGINQV…TIESSDSNES (77 aa). Residues 109–229 form the OTU domain; it reads LSVHPVLDDN…GIHYDSLTMN (121 aa). The segment at 114 to 120 is cys-loop; it reads VLDDNSC. The active site involves Asp-117. Cys-120 functions as the Nucleophile in the catalytic mechanism. Lys-160 is covalently cross-linked (Glycyl lysine isopeptide (Lys-Gly) (interchain with G-Cter in ubiquitin)). Residues 169-179 form a variable-loop region; sequence ILKMESWGGAI. The tract at residues 218 to 222 is his-loop; it reads FNGIH. Ile-221 is a binding site for substrate. Residue His-222 is part of the active site. Residues 243–248 are S2 site; sequence DDVLTA. A C2H2-type zinc finger spans residues 270 to 294; sequence IKCNTCQMTFVGEREVARHAESTGH. His-294 is an active-site residue.

In terms of assembly, forms a complex composed of CDC48, NPL4, UFD1, DOA1, SHP1 and deubiquitinase OTU1; within the complex interacts with CDC48 and DOA1/UFD3.

The protein resides in the cytoplasm. The protein localises to the nucleus. It catalyses the reaction Thiol-dependent hydrolysis of ester, thioester, amide, peptide and isopeptide bonds formed by the C-terminal Gly of ubiquitin (a 76-residue protein attached to proteins as an intracellular targeting signal).. Hydrolase that can remove conjugated ubiquitin from proteins and may therefore play an important regulatory role at the level of protein turnover by preventing degradation. Participates in the regulation of the ubiquitin conjugation pathway involving CDC48 by hindering multiubiquitination of substrates at the CDC48 chaperone. May be indirectly involved in PIS1 gene expression. The protein is Ubiquitin thioesterase OTU1 (OTU1) of Saccharomyces cerevisiae (strain ATCC 204508 / S288c) (Baker's yeast).